The chain runs to 506 residues: Maturase K (506 aa).

This sequence belongs to the intron maturase 2 family. MatK subfamily.

The protein localises to the plastid. Its subcellular location is the chloroplast. Its function is as follows. Usually encoded in the trnK tRNA gene intron. Probably assists in splicing its own and other chloroplast group II introns. This is Maturase K from Trifolium wormskioldii (Cows clover).